Here is a 131-residue protein sequence, read N- to C-terminus: MSWQAYVDEHLMCEIEGHHLASAAILGHDGTVWAQSADFPQFKPEEITGIMKDFDEPGHLAPTGMFVAAAKYMVIQGEPGAVTRGKKGAGGITIKKTGQALVVGIYDEPMTPGQCNMVVERLGDYLVKQGL.

Cys-13 and Cys-115 are joined by a disulfide. The Involved in PIP2 interaction signature appears at 81 to 97 (AVTRGKKGAGGITIKKT). Thr-111 carries the phosphothreonine modification.

Belongs to the profilin family. As to quaternary structure, occurs in many kinds of cells as a complex with monomeric actin in a 1:1 ratio. In terms of processing, phosphorylated by MAP kinases.

It localises to the cytoplasm. It is found in the cytoskeleton. Functionally, binds to actin and affects the structure of the cytoskeleton. At high concentrations, profilin prevents the polymerization of actin, whereas it enhances it at low concentrations. The protein is Profilin-9 of Phleum pratense (Common timothy).